A 152-amino-acid polypeptide reads, in one-letter code: UPF0225 protein YchJ (152 aa).

This sequence belongs to the UPF0225 family.

The chain is UPF0225 protein YchJ from Escherichia coli O127:H6 (strain E2348/69 / EPEC).